Here is a 548-residue protein sequence, read N- to C-terminus: Probable malate:quinone oxidoreductase (548 aa).

The interval Asp521–Leu548 is disordered. Positions Pro530–Lys541 are enriched in low complexity.

Belongs to the MQO family. It depends on FAD as a cofactor.

The catalysed reaction is (S)-malate + a quinone = a quinol + oxaloacetate. It functions in the pathway carbohydrate metabolism; tricarboxylic acid cycle; oxaloacetate from (S)-malate (quinone route): step 1/1. This is Probable malate:quinone oxidoreductase from Escherichia coli O17:K52:H18 (strain UMN026 / ExPEC).